We begin with the raw amino-acid sequence, 566 residues long: Alpha-N-acetylgalactosaminide alpha-2,6-sialyltransferase 1 (566 aa).

At 1-16 the chain is on the cytoplasmic side; that stretch reads MGFLIRRLPKDSRIFR. A helical; Signal-anchor for type II membrane protein membrane pass occupies residues 17–37; it reads WLLILTVFSFIITSFSALFGM. Residues 38-566 are Lumenal-facing; it reads EKSIFRQLKI…ENIMKLYQRS (529 aa). 2 N-linked (GlcNAc...) asparagine glycosylation sites follow: asparagine 66 and asparagine 132. The tract at residues 138–161 is disordered; it reads ASVVERTKEKTTARPVPGVGEADG. An N-linked (GlcNAc...) asparagine glycan is attached at asparagine 192. Copy 1 of the repeat occupies 247–254; the sequence is SSSPVSTC. The interval 247 to 337 is 2 X 8 AA repeats of S-S-S-X-V-S-T-C; that stretch reads SSSPVSTCSE…ANSSSNVSTC (91 aa). Disulfide bonds link cysteine 254/cysteine 337 and cysteine 340/cysteine 508. N-linked (GlcNAc...) asparagine glycosylation is found at asparagine 275, asparagine 286, asparagine 306, asparagine 329, and asparagine 333. The stretch at 330–337 is repeat 2; sequence SSSNVSTC.

It belongs to the glycosyltransferase 29 family. In terms of tissue distribution, heart, kidney, testes, brain, liver and lung.

The protein localises to the golgi apparatus membrane. The enzyme catalyses a beta-D-galactosyl-(1-&gt;3)-N-acetyl-alpha-D-galactosaminyl derivative + CMP-N-acetyl-beta-neuraminate = a beta-D-galactosyl-(1-&gt;3)-[N-acetyl-alpha-neuraminyl-(2-&gt;6)]-N-acetyl-alpha-D-galactosaminyl derivative + CMP + H(+). It catalyses the reaction a 3-O-[N-acetyl-alpha-D-galactosaminyl]-L-seryl-[protein] + CMP-N-acetyl-beta-neuraminate = a 3-O-[N-acetyl-alpha-neuraminosyl-(2-&gt;6)-N-acetyl-alpha-D-galactosaminyl]-L-seryl-[protein] + CMP + H(+). The catalysed reaction is a 3-O-[N-acetyl-alpha-D-galactosaminyl]-L-threonyl-[protein] + CMP-N-acetyl-beta-neuraminate = a 3-O-[N-acetyl-alpha-neuraminosyl-(2-&gt;6)-N-acetyl-alpha-D-galactosaminyl]-L-threonyl-[protein] + CMP + H(+). It carries out the reaction a 3-O-[beta-D-galactosyl-(1-&gt;3)-N-acetyl-alpha-D-galactosaminyl]-L-seryl-[protein] + CMP-N-acetyl-beta-neuraminate = a 3-O-{beta-D-galactosyl-(1-&gt;3)-[N-acetyl-alpha-neuraminosyl-(2-&gt;6)]-N-acetyl-alpha-D-galactosaminyl}-L-seryl-[protein] + CMP + H(+). The enzyme catalyses a 3-O-[beta-D-galactosyl-(1-&gt;3)-N-acetyl-alpha-D-galactosaminyl]-L-threonyl-[protein] + CMP-N-acetyl-beta-neuraminate = a 3-O-{beta-D-galactosyl-(1-&gt;3)-[N-acetyl-alpha-neuraminosyl-(2-&gt;6)]-N-acetyl-alpha-D-galactosaminyl}-L-threonyl-[protein] + CMP + H(+). It catalyses the reaction a 3-O-[N-acetyl-alpha-neuraminyl-(2-&gt;3)-beta-D-galactosyl-(1-&gt;3)-N-acetyl-alpha-D-galactosaminyl]-L-threonyl-[protein] + CMP-N-acetyl-beta-neuraminate = a 3-O-{alpha-Neu5Ac-(2-&gt;3)-beta-D-Gal-(1-&gt;3)-[alpha-Neu5Ac-(2-&gt;6)]-alpha-D-GalNAc}-L-threonyl-[protein] + CMP + H(+). The protein operates within protein modification; protein glycosylation. Protein sialyltransferase specifically expressed in goblet cells that plays a key role in intestinal host-commensal homeostasis. Conjugates sialic acid with an alpha-2-6 linkage to N-acetylgalactosamine (GalNAc) glycan chains linked to serine or threonine in glycoproteins. Generates sialylated T and Tn antigens.. The polypeptide is Alpha-N-acetylgalactosaminide alpha-2,6-sialyltransferase 1 (ST6GALNAC1) (Gallus gallus (Chicken)).